The chain runs to 275 residues: TATA-box-binding protein (275 aa).

Disordered stretches follow at residues E23 to N45 and G73 to A92. A run of 2 repeats spans residues L103 to V179 and I193 to L270.

Belongs to the TBP family. Belongs to the TFIID complex together with the TBP-associated factors (TAFs). Binds DNA as monomer.

It is found in the nucleus. Its function is as follows. General transcription factor that functions at the core of the DNA-binding multiprotein factor TFIID. Binding of TFIID to the TATA box is the initial transcriptional step of the pre-initiation complex (PIC), playing a role in the activation of eukaryotic genes transcribed by RNA polymerase II. In Artemia franciscana (Brine shrimp), this protein is TATA-box-binding protein.